Reading from the N-terminus, the 274-residue chain is Large ribosomal subunit protein uL2 (274 aa).

Disordered stretches follow at residues 28–55 (APHA…RHVG) and 224–274 (VAMN…RRRK).

It belongs to the universal ribosomal protein uL2 family. As to quaternary structure, part of the 50S ribosomal subunit. Forms a bridge to the 30S subunit in the 70S ribosome.

Functionally, one of the primary rRNA binding proteins. Required for association of the 30S and 50S subunits to form the 70S ribosome, for tRNA binding and peptide bond formation. It has been suggested to have peptidyltransferase activity; this is somewhat controversial. Makes several contacts with the 16S rRNA in the 70S ribosome. The protein is Large ribosomal subunit protein uL2 of Pseudomonas putida (strain ATCC 47054 / DSM 6125 / CFBP 8728 / NCIMB 11950 / KT2440).